A 1407-amino-acid chain; its full sequence is MMISRGLFGWSPPHIQPLTPVSEVSEPPESPSPYLDPGAEHGGTGTAAQADDEEEMEEPEEMEPPPAAVPFSQLFACADRFDWVLMVFGSVAAAAHGTALIVYLHYFAKIVQVLAFPTDSDHLISDDQFNRLLELSLTIVYIAGGVFISGWIEVSCWILTGERQTAVIRSKYVQVLLNQDMSFFDTYGNNGDIVSQVLSDVLLIQSALSEKVGNYIHNMATFISGLIIGFVNCWEIALITLATGPFIVAAGGISNIFLHRLAENIQDAYAEAASIAEQAVSYVRTLYAFTNETLAKYSYATSLQATLRYGILISLVQGLGLGFTYGLAICSCAMQLWIGRFFVIHHRANGGEIITALFAVILSGLGLNQAATNFYSFDQGRIAAYRLFEMISRSSSGTNQEGIILSAVQGNIEFRNVYFSYLSRPEIPILSGFYLTVPAKKAVALVGRNGSGKSSIIPLMERFYDPTLGEVLLDGENIKNLKLEWLRSQIGLVTQEPALLSLSIRENIAYGRDATLDQIEEAAKKAHAHTFISSLEKGYETQVGKTGLTLTEEQKIKLSIARAVLLDPTILLLDEVTGGLDFEAERVVQEALDLLMLGRSTIIIARRLSLIRNADYIAVMEEGQLLEMGTHDELINLGNLYAELLKCEEATKLPRRMPVRNYNDSAAFQAERDSSAGRGFQEPSSPKMAKSPSLQRGHNVFRSQELCFNSEESPNDHSPAPEKLGENGSSLDVGEKEPTIKRQDSFEMRLPELPKIDIQCPQRQKSNGSDPESPISPLLISDPQNERSHSQTFSRPLGHSDDTSASVKVAKDGQHKEPPSFWRLAQLSFPEWLYAVLGSIGAAIFGSFNPLLAYVIALVVTTYYTSKGSHLREEVDKWCLIIACMGIVTVVANFLQHFYFGIMGEKMTERVRRMMFSAMLRNEVGWYDEEENSPDTLSMRLANDATFVRAAFSNRLSIFIQDSFAVIVAILIGLLLGWRLALVALATLPVLTLSAIAQKLWLAGFSKGIQEMHRKASLVLEDAVRNIYTVVAFCAGNKVMELYRLQLQRILRQSFFHGMAIGFAFGFSQFLLFACNALLLWYTALSVDRRYMKLSTALTEYMVFSFATFALVEPFGLAPYILKRRRSLASVFEIIDRVPTIEPDDTSALSPPNVYGSIELKNIDFCYPTRPEVLVLSNFSLKVNGGQTVAVVGVSGSGKSTIISLIERYYDPVAGQVLLDGRDLKSYNLRWLRSHMGLIQQEPIIFSTTIRENIIYARHNASEAEMKEAARIANAHHFISSLPHGYDTHIGMRGVELTQGQKQRIAIARVVLKNAPILLIDEASSSIESESSRVVQEALDTLIMGNKTTILIAHRVAMMRHVDNIVVLNGGKIVEEGTHDCLAGKNGLYVRLMQPHFGKNLRRHQLI.

The interval 18 to 65 is disordered; sequence LTPVSEVSEPPESPSPYLDPGAEHGGTGTAAQADDEEEMEEPEEMEPP. Residues 50–63 show a composition bias toward acidic residues; it reads ADDEEEMEEPEEME. 4 helical membrane-spanning segments follow: residues 84–104, 139–159, 212–231, and 236–258; these read VLMV…IVYL, IVYI…CWIL, VGNY…IGFV, and IALI…NIFL. The ABC transmembrane type-1 1 domain maps to 86-379; that stretch reads MVFGSVAAAA…AATNFYSFDQ (294 aa). Residue Asn291 is glycosylated (N-linked (GlcNAc...) asparagine). 2 helical membrane passes run 310 to 330 and 351 to 371; these read GILI…LAIC and GEII…NQAA. Positions 412-647 constitute an ABC transporter 1 domain; sequence IEFRNVYFSY…GNLYAELLKC (236 aa). 447–454 lines the ATP pocket; that stretch reads GRNGSGKS. Asn449 and Asn663 each carry an N-linked (GlcNAc...) asparagine glycan. Disordered stretches follow at residues 670 to 696 and 709 to 815; these read AERD…SLQR and NSEE…DGQH. N-linked (GlcNAc...) asparagine glycosylation is present at Asn727. The segment covering 733-755 has biased composition (basic and acidic residues); the sequence is VGEKEPTIKRQDSFEMRLPELPK. Positions 761–770 are enriched in polar residues; it reads PQRQKSNGSD. N-linked (GlcNAc...) asparagine glycosylation occurs at Asn767. An ABC transmembrane type-1 2 domain is found at 835 to 1123; the sequence is AVLGSIGAAI…PFGLAPYILK (289 aa). A run of 6 helical transmembrane segments spans residues 840-860, 880-900, 958-978, 982-1002, 1061-1081, and 1102-1122; these read IGAA…ALVV, LIIA…HFYF, IFIQ…LLGW, LVAL…KLWL, IGFA…LLLW, and MVFS…PYIL. Residues 1158-1395 enclose the ABC transporter 2 domain; sequence IELKNIDFCY…NGLYVRLMQP (238 aa). N-linked (GlcNAc...) asparagine glycosylation occurs at Asn1178. Residue 1193 to 1200 participates in ATP binding; it reads GVSGSGKS. Asn1260 and Asn1346 each carry an N-linked (GlcNAc...) asparagine glycan.

Belongs to the ABC transporter superfamily. ABCB family. Multidrug resistance exporter (TC 3.A.1.201) subfamily. Expressed in aerial tissues.

The protein localises to the membrane. It carries out the reaction (indol-3-yl)acetate(in) + ATP + H2O = (indol-3-yl)acetate(out) + ADP + phosphate + H(+). Probable auxin efflux transporter that contributes, together with ABCB20 and in a FKBP42/TWD1-dependent manner, to the regulation of leaf position and morphology, internode distribution, roots development, and inflorescence organization, probably by modulating auxin repartition. This is ABC transporter B family member 6 from Arabidopsis thaliana (Mouse-ear cress).